Reading from the N-terminus, the 462-residue chain is Integrator complex subunit 12 (462 aa).

A disordered region spans residues 39–132 (LARGIDSSYR…PETRSSPITV (94 aa)). Positions 59 to 86 (ISSTKTVSVKQEPKTSSSLPSGNNNGKV) are enriched in polar residues. K68 is covalently cross-linked (Glycyl lysine isopeptide (Lys-Gly) (interchain with G-Cter in SUMO2)). Over residues 88 to 125 (TTEKVKKEGEKRPADKMKSDITEGADVPKKPRLEKPET) the composition is skewed to basic and acidic residues. S128 carries the phosphoserine modification. Residues 159–215 (GLACVVCRQMTVASGNQLVECQECHNLYHQDCHKPQVTDKEVTDPRLVWYCARCTRQ) form a PHD-type zinc finger. Residue K254 forms a Glycyl lysine isopeptide (Lys-Gly) (interchain with G-Cter in SUMO2) linkage. A compositionally biased stretch (polar residues) spans 305 to 328 (PSTAKLSSAAQNNSGKPATSSANQ). The disordered stretch occupies residues 305-462 (PSTAKLSSAA…KKAAQKKLKK (158 aa)). Low complexity-rich tracts occupy residues 347–358 (KIGSSNSTSPTV) and 382–431 (VSKV…PSAS). Positions 434–443 (GPTSQESQLN) are enriched in polar residues. The span at 449-462 (QMVKKKAAQKKLKK) shows a compositional bias: basic residues.

It belongs to the Integrator subunit 12 family. As to quaternary structure, component of the Integrator complex, composed of core subunits INTS1, INTS2, INTS3, INTS4, INTS5, INTS6, INTS7, INTS8, INTS9/RC74, INTS10, INTS11/CPSF3L, INTS12, INTS13, INTS14 and INTS15. The core complex associates with protein phosphatase 2A subunits PPP2CA and PPP2R1A, to form the Integrator-PP2A (INTAC) complex. In terms of processing, dephosphorylated at Ser-128 by the PNUTS-PP1 complex, promoting RNA polymerase II transcription pause-release.

It is found in the nucleus. Its function is as follows. Component of the integrator complex, a multiprotein complex that terminates RNA polymerase II (Pol II) transcription in the promoter-proximal region of genes. The integrator complex provides a quality checkpoint during transcription elongation by driving premature transcription termination of transcripts that are unfavorably configured for transcriptional elongation: the complex terminates transcription by (1) catalyzing dephosphorylation of the C-terminal domain (CTD) of Pol II subunit POLR2A/RPB1 and SUPT5H/SPT5, (2) degrading the exiting nascent RNA transcript via endonuclease activity and (3) promoting the release of Pol II from bound DNA. The integrator complex is also involved in terminating the synthesis of non-coding Pol II transcripts, such as enhancer RNAs (eRNAs), small nuclear RNAs (snRNAs), telomerase RNAs and long non-coding RNAs (lncRNAs). Mediates recruitment of cytoplasmic dynein to the nuclear envelope, probably as component of the integrator complex. The polypeptide is Integrator complex subunit 12 (INTS12) (Bos taurus (Bovine)).